The primary structure comprises 240 residues: Thiamine-phosphate synthase (240 aa).

4-amino-2-methyl-5-(diphosphooxymethyl)pyrimidine is bound by residues 63–67 (QYREK) and N94. Mg(2+)-binding residues include D95 and D114. T133 contacts 4-amino-2-methyl-5-(diphosphooxymethyl)pyrimidine. 159 to 161 (TFT) is a 2-[(2R,5Z)-2-carboxy-4-methylthiazol-5(2H)-ylidene]ethyl phosphate binding site. K162 lines the 4-amino-2-methyl-5-(diphosphooxymethyl)pyrimidine pocket. 2-[(2R,5Z)-2-carboxy-4-methylthiazol-5(2H)-ylidene]ethyl phosphate contacts are provided by residues G190 and 210 to 211 (IS).

This sequence belongs to the thiamine-phosphate synthase family. Mg(2+) serves as cofactor.

The enzyme catalyses 2-[(2R,5Z)-2-carboxy-4-methylthiazol-5(2H)-ylidene]ethyl phosphate + 4-amino-2-methyl-5-(diphosphooxymethyl)pyrimidine + 2 H(+) = thiamine phosphate + CO2 + diphosphate. The catalysed reaction is 2-(2-carboxy-4-methylthiazol-5-yl)ethyl phosphate + 4-amino-2-methyl-5-(diphosphooxymethyl)pyrimidine + 2 H(+) = thiamine phosphate + CO2 + diphosphate. It carries out the reaction 4-methyl-5-(2-phosphooxyethyl)-thiazole + 4-amino-2-methyl-5-(diphosphooxymethyl)pyrimidine + H(+) = thiamine phosphate + diphosphate. It functions in the pathway cofactor biosynthesis; thiamine diphosphate biosynthesis; thiamine phosphate from 4-amino-2-methyl-5-diphosphomethylpyrimidine and 4-methyl-5-(2-phosphoethyl)-thiazole: step 1/1. Its function is as follows. Condenses 4-methyl-5-(beta-hydroxyethyl)thiazole monophosphate (THZ-P) and 2-methyl-4-amino-5-hydroxymethyl pyrimidine pyrophosphate (HMP-PP) to form thiamine monophosphate (TMP). This Methanosarcina mazei (strain ATCC BAA-159 / DSM 3647 / Goe1 / Go1 / JCM 11833 / OCM 88) (Methanosarcina frisia) protein is Thiamine-phosphate synthase.